The chain runs to 158 residues: 18.2 kDa class I heat shock protein (158 aa).

Residues 44 to 158 (ENSAFVSTRV…PEVKTIDISG (115 aa)) form the sHSP domain.

Belongs to the small heat shock protein (HSP20) family. In terms of assembly, forms oligomeric structures.

It is found in the cytoplasm. In Medicago sativa (Alfalfa), this protein is 18.2 kDa class I heat shock protein (HSP18.2).